The chain runs to 363 residues: Phosphoserine aminotransferase (363 aa).

Residue arginine 42 participates in L-glutamate binding. Pyridoxal 5'-phosphate is bound by residues 76-77, tryptophan 101, threonine 151, aspartate 170, and glutamine 193; that span reads AS. The residue at position 194 (lysine 194) is an N6-(pyridoxal phosphate)lysine. A pyridoxal 5'-phosphate-binding site is contributed by 234-235; that stretch reads NT.

It belongs to the class-V pyridoxal-phosphate-dependent aminotransferase family. SerC subfamily. Homodimer. Pyridoxal 5'-phosphate serves as cofactor.

It localises to the cytoplasm. It carries out the reaction O-phospho-L-serine + 2-oxoglutarate = 3-phosphooxypyruvate + L-glutamate. It catalyses the reaction 4-(phosphooxy)-L-threonine + 2-oxoglutarate = (R)-3-hydroxy-2-oxo-4-phosphooxybutanoate + L-glutamate. The protein operates within amino-acid biosynthesis; L-serine biosynthesis; L-serine from 3-phospho-D-glycerate: step 2/3. Functionally, catalyzes the reversible conversion of 3-phosphohydroxypyruvate to phosphoserine and of 3-hydroxy-2-oxo-4-phosphonooxybutanoate to phosphohydroxythreonine. In Listeria monocytogenes serotype 4b (strain F2365), this protein is Phosphoserine aminotransferase.